The chain runs to 683 residues: uncharacterized protein (683 aa).

The next 14 helical transmembrane spans lie at 12 to 32 (LLLYYGLFTLGLFGFVGMMGL), 41 to 61 (LWLGYVFLFITIAIYACIGLI), 84 to 104 (MAIAADWMSAASFIGLAGILF), 110 to 130 (GLAYVMGWTGGYCLVAFLLAP), 162 to 182 (IAVLAASLCSFVYLVAQIQGV), 194 to 214 (FAVGIFFGLAGILVCSFLGGM), 221 to 241 (QVAQYIMMIVAFLVTVSMIAW), 377 to 397 (LNFVLLVFCLMVGTASLPHIL), 413 to 433 (VAWAVFFIALLYVSAPTLAAL), 495 to 515 (IAGLPYVISGLIAAGALAAAL), 548 to 568 (VTTAKIVLLGVALFASYVTSL), 573 to 593 (ILFLVGAAFSLAASSFFPVLV), 603 to 623 (AAGAVAGMAAGLGVAVYYIIV), and 645 to 665 (IASGAFGVPAGFAVAIIVSLL).

This sequence belongs to the sodium:solute symporter (SSF) (TC 2.A.21) family.

It is found in the cell membrane. This is an uncharacterized protein from Cupriavidus necator (strain ATCC 17699 / DSM 428 / KCTC 22496 / NCIMB 10442 / H16 / Stanier 337) (Ralstonia eutropha).